The chain runs to 316 residues: L-lactate dehydrogenase (316 aa).

Residues Val-15, Asp-37, Lys-42, Tyr-68, and 82 to 83 each bind NAD(+); that span reads GL. Residues Gln-85, Arg-91, and 123 to 126 each bind substrate; that span reads NPVD. Residues 121–123 and Thr-146 each bind NAD(+); that span reads ASN. 151–154 is a substrate binding site; that stretch reads DTSR. 2 residues coordinate beta-D-fructose 1,6-bisphosphate: Arg-156 and His-171. His-178 (proton acceptor) is an active-site residue. The residue at position 222 (Tyr-222) is a Phosphotyrosine. A substrate-binding site is contributed by Thr-231.

This sequence belongs to the LDH/MDH superfamily. LDH family. In terms of assembly, homotetramer.

The protein resides in the cytoplasm. The catalysed reaction is (S)-lactate + NAD(+) = pyruvate + NADH + H(+). Its pathway is fermentation; pyruvate fermentation to lactate; (S)-lactate from pyruvate: step 1/1. With respect to regulation, allosterically activated by fructose 1,6-bisphosphate (FBP). Catalyzes the conversion of lactate to pyruvate. The chain is L-lactate dehydrogenase from Borreliella burgdorferi (strain ATCC 35210 / DSM 4680 / CIP 102532 / B31) (Borrelia burgdorferi).